We begin with the raw amino-acid sequence, 175 residues long: Ribosome maturation factor RimM (175 aa).

The PRC barrel domain occupies 95 to 175 (SEDEFYWREL…RIEVDWDPGF (81 aa)).

The protein belongs to the RimM family. In terms of assembly, binds ribosomal protein uS19.

Its subcellular location is the cytoplasm. An accessory protein needed during the final step in the assembly of 30S ribosomal subunit, possibly for assembly of the head region. Essential for efficient processing of 16S rRNA. May be needed both before and after RbfA during the maturation of 16S rRNA. It has affinity for free ribosomal 30S subunits but not for 70S ribosomes. In Aliivibrio salmonicida (strain LFI1238) (Vibrio salmonicida (strain LFI1238)), this protein is Ribosome maturation factor RimM.